The chain runs to 1085 residues: SLIT-ROBO Rho GTPase-activating protein 1 (1085 aa).

An F-BAR domain is found at 19–314; that stretch reads SQVKEIRAQL…AVDNLEPRSD (296 aa). Positions 351 to 390 form a coiled coil; the sequence is VQAELMLRYQQLQSRLATLKIENEEVKKTTEATLQTIQDM. Ser416 is modified (phosphoserine). Positions 475-496 are disordered; that stretch reads YMTTRPPNVPPKPQKHRKSRPR. One can recognise a Rho-GAP domain in the interval 506-694; the sequence is GDLETFVKDS…TIIIHHETIF (189 aa). The 60-residue stretch at 743–802 folds into the SH3 domain; it reads CEPIEAIAKFDYVGRSARELSFKKGASLLLYHRASEDWWEGRHNGIDGLVPHQYIVVQDM. Residues 808 to 822 show a composition bias toward polar residues; that stretch reads DTLSQKADSEASSGP. The tract at residues 808 to 954 is disordered; the sequence is DTLSQKADSE…TGFNDHKPLD (147 aa). Ser835 and Ser917 each carry phosphoserine. Over residues 922–931 the composition is skewed to basic and acidic residues; it reads SRHDSLKKID. Ser932 is modified (phosphoserine). A compositionally biased stretch (polar residues) spans 937-946; it reads RSTSSGQYTG. Residues 956–985 adopt a coiled-coil conformation; that stretch reads ETIAQDIEETMNTALNELRELERQSTAKHA. Residues 997–1011 show a composition bias toward polar residues; the sequence is KNSPTPATSTESLSP. Disordered stretches follow at residues 997-1038 and 1051-1085; these read KNSP…MSTF and KPPALRPKPAVLPKTNPTIGPAPPPQGPTDKSCTM. Ser999 carries the post-translational modification Phosphoserine. Thr1001 is modified (phosphothreonine). A compositionally biased stretch (low complexity) spans 1027 to 1037; the sequence is STSSSSDTMST. Ser1032 carries the phosphoserine modification.

Homodimer. Forms a heterooligomer with SRGAP2 and SRGAP3 through its F-BAR domain. Interacts with ROBO1, CDC42 and RHOA. Interacts with FASLG. In terms of tissue distribution, expressed in brain, lung, kidney, and testis.

Its function is as follows. GTPase-activating protein for RhoA and Cdc42 small GTPases. Together with CDC42 seems to be involved in the pathway mediating the repulsive signaling of Robo and Slit proteins in neuronal migration. SLIT2, probably through interaction with ROBO1, increases the interaction of SRGAP1 with ROBO1 and inactivates CDC42. The sequence is that of SLIT-ROBO Rho GTPase-activating protein 1 (SRGAP1) from Homo sapiens (Human).